We begin with the raw amino-acid sequence, 567 residues long: Proline--tRNA ligase (567 aa).

Belongs to the class-II aminoacyl-tRNA synthetase family. ProS type 1 subfamily. In terms of assembly, homodimer.

It localises to the cytoplasm. The catalysed reaction is tRNA(Pro) + L-proline + ATP = L-prolyl-tRNA(Pro) + AMP + diphosphate. In terms of biological role, catalyzes the attachment of proline to tRNA(Pro) in a two-step reaction: proline is first activated by ATP to form Pro-AMP and then transferred to the acceptor end of tRNA(Pro). As ProRS can inadvertently accommodate and process non-cognate amino acids such as alanine and cysteine, to avoid such errors it has two additional distinct editing activities against alanine. One activity is designated as 'pretransfer' editing and involves the tRNA(Pro)-independent hydrolysis of activated Ala-AMP. The other activity is designated 'posttransfer' editing and involves deacylation of mischarged Ala-tRNA(Pro). The misacylated Cys-tRNA(Pro) is not edited by ProRS. The protein is Proline--tRNA ligase of Staphylococcus aureus (strain Mu3 / ATCC 700698).